A 166-amino-acid polypeptide reads, in one-letter code: Heavy metal-associated isoprenylated plant protein 45 (166 aa).

The 64-residue stretch at leucine 15–glutamate 78 folds into the HMA domain. Residues cysteine 26 and cysteine 29 each coordinate a metal cation. Cysteine 163 bears the Cysteine methyl ester mark. Cysteine 163 carries the S-farnesyl cysteine lipid modification. A propeptide spans threonine 164–methionine 166 (removed in mature form).

The protein belongs to the HIPP family.

Its function is as follows. Heavy-metal-binding protein. The protein is Heavy metal-associated isoprenylated plant protein 45 of Arabidopsis thaliana (Mouse-ear cress).